The following is an 83-amino-acid chain: Small ribosomal subunit protein bS20 (83 aa).

The segment covering 1 to 11 (MANHKSAAKRA) has biased composition (basic residues). Residues 1–44 (MANHKSAAKRAKQSEARRLRNKSTRSSMNTAVKKVRTAKEAGTD) are disordered.

The protein belongs to the bacterial ribosomal protein bS20 family.

Its function is as follows. Binds directly to 16S ribosomal RNA. In Desulforapulum autotrophicum (strain ATCC 43914 / DSM 3382 / VKM B-1955 / HRM2) (Desulfobacterium autotrophicum), this protein is Small ribosomal subunit protein bS20.